The following is a 627-amino-acid chain: MSAADANQVQESLEKLNLDSAPVASTEETEQTASGETEEAADSAQVSDTSASLYVGELNPSVNEALLFEIFSPIGQVASIRVCRDAVTKKSLGYAYVNFHKFEDGEKAIEDLNYSLIEGRPCRIMWSQRDPSLRRNGDGNIFIKNLHPAIDNKALHDTFTAFGKILSCKVATDDMGISKCFGFVHYETAEAAEAAIENVNGMLLNDREVYVGKHISKKDRESKFEEMKANFTNVYAKNIDLDFSEEEFKKLFEAYGKITSIYLEKDHEGKSKGFGFVNFENHESAVKAVDELNDKEINGQKIYVGRAQKKRERLEELKKQYENTRLEKLSKYQGVNLFIKNLDDTIDSEKLEEEFKPFGSITSARVMVDETGKSKGFGFVCFSSPEEATKAITEMNQRMIYGKPLYVALAQRKDVRRSQLEQQIQARNQMRMQNAAATGGIPGQFIPPMFYGQQPGFFPPNGRGNGPFPGPNPQMMMPRGQIPPPQGQWPRPGPNGQPVPVYGMPPVYGGDFNNGANGGRQQRGYYPNRNQNQKGRQQKDLAAIIANAPADQQKRILGEELYPKIVSTGKAQEPEAAGKITGMMLDLDNEEILALLEDDELFNTHFEDALTAFEEYKKSSEAATAEN.

A compositionally biased stretch (polar residues) spans 1 to 11 (MSAADANQVQE). Residues 1–46 (MSAADANQVQESLEKLNLDSAPVASTEETEQTASGETEEAADSAQV) are disordered. RRM domains follow at residues 51 to 129 (ASLY…WSQR), 139 to 216 (GNIF…KHIS), 232 to 309 (TNVY…RAQK), and 335 to 412 (VNLF…LAQR). Positions 511–535 (DFNNGANGGRQQRGYYPNRNQNQKG) are enriched in low complexity. The tract at residues 511–537 (DFNNGANGGRQQRGYYPNRNQNQKGRQ) is disordered. The 82-residue stretch at 537–618 (QQKDLAAIIA…ALTAFEEYKK (82 aa)) folds into the PABC domain.

This sequence belongs to the polyadenylate-binding protein type-1 family.

It is found in the cytoplasm. The protein resides in the nucleus. In terms of biological role, binds the poly(A) tail of mRNA. Appears to be an important mediator of the multiple roles of the poly(A) tail in mRNA biogenesis, stability and translation. In the nucleus, involved in both mRNA cleavage and polyadenylation. Is also required for efficient mRNA export to the cytoplasm. Acts in concert with a poly(A)-specific nuclease (PAN) to affect poly(A) tail shortening, which may occur concomitantly with either nucleocytoplasmic mRNA transport or translational initiation. In the cytoplasm, stimulates translation initiation and regulates mRNA decay through translation termination-coupled poly(A) shortening, probably mediated by PAN. This is Polyadenylate-binding protein, cytoplasmic and nuclear (PAB1) from Debaryomyces hansenii (strain ATCC 36239 / CBS 767 / BCRC 21394 / JCM 1990 / NBRC 0083 / IGC 2968) (Yeast).